Here is a 217-residue protein sequence, read N- to C-terminus: Adenylate kinase (217 aa).

Residue 10–15 (GAGKGT) participates in ATP binding. The interval 30-59 (STGDIFRANIKNNTELGAKAKEYMDQGLLV) is NMP. AMP contacts are provided by residues Thr-31, Arg-36, 57–59 (LLV), 85–88 (GFPR), and Gln-92. Positions 126–163 (GRRACVSCGGTYHVVFTPTKKEGICDACGGELTIRDDD) are LID. Arg-127 is an ATP binding site. Cys-130 and Cys-133 together coordinate Zn(2+). 136-137 (TY) lines the ATP pocket. Residues Cys-150 and Cys-153 each coordinate Zn(2+). Positions 160 and 171 each coordinate AMP. ATP is bound at residue Lys-199.

The protein belongs to the adenylate kinase family. As to quaternary structure, monomer.

It localises to the cytoplasm. The catalysed reaction is AMP + ATP = 2 ADP. The protein operates within purine metabolism; AMP biosynthesis via salvage pathway; AMP from ADP: step 1/1. Functionally, catalyzes the reversible transfer of the terminal phosphate group between ATP and AMP. Plays an important role in cellular energy homeostasis and in adenine nucleotide metabolism. This Lachnoclostridium phytofermentans (strain ATCC 700394 / DSM 18823 / ISDg) (Clostridium phytofermentans) protein is Adenylate kinase.